Reading from the N-terminus, the 698-residue chain is Methionine synthase reductase (698 aa).

A Flavodoxin-like domain is found at 5 to 147; sequence LLLYATQQGQ…VVEPWIAGLW (143 aa). 93–124 contributes to the FMN binding site; the sequence is LLGLGDSEYTYFCNGGKIIDKRLQELGARHFY. A hinge region spans residues 166-247; sequence ALPVASPASS…ASLNIPGLPP (82 aa). A phosphoserine mark is found at serine 171 and serine 189. The 263-residue stretch at 271 to 533 folds into the FAD-binding FR-type domain; the sequence is DPVFQVPISK…PRTTNSFHLP (263 aa). Lysine 291 is a binding site for NADP(+). Residues 451 to 454 and 487 to 490 contribute to the FAD site; these read RPYS and GVCT. Residues 610–611, 624–626, and aspartate 659 contribute to the NADP(+) site; these read SR and YVQ. An FAD-binding site is contributed by tryptophan 697.

Forms a multiprotein complex with MMACHC, MMADHC and MTR. It depends on FAD as a cofactor. FMN serves as cofactor. As to expression, found in all tissues tested, particularly abundant in skeletal muscle.

The protein resides in the cytoplasm. The enzyme catalyses 2 methylcob(III)alamin-[methionine synthase] + 2 S-adenosyl-L-homocysteine + NADP(+) + H(+) = 2 cob(II)alamin-[methionine synthase] + 2 S-adenosyl-L-methionine + NADPH. It carries out the reaction 2 cob(II)alamin + A + 2 H2O + 2 H(+) = 2 aquacob(III)alamin + AH2. Its function is as follows. Key enzyme in methionine and folate homeostasis responsible for the reactivation of methionine synthase (MTR/MS) activity by catalyzing the reductive methylation of MTR-bound cob(II)alamin. Cobalamin (vitamin B12) forms a complex with MTR to serve as an intermediary in methyl transfer reactions that cycles between MTR-bound methylcob(III)alamin and MTR bound-cob(I)alamin forms, and occasional oxidative escape of the cob(I)alamin intermediate during the catalytic cycle leads to the inactive cob(II)alamin species. The processing of cobalamin in the cytosol occurs in a multiprotein complex composed of at least MMACHC, MMADHC, MTRR and MTR which may contribute to shuttle safely and efficiently cobalamin towards MTR in order to produce methionine. Also necessary for the utilization of methyl groups from the folate cycle, thereby affecting transgenerational epigenetic inheritance. Also acts as a molecular chaperone for methionine synthase by stabilizing apoMTR and incorporating methylcob(III)alamin into apoMTR to form the holoenzyme. Also serves as an aquacob(III)alamin reductase by reducing aquacob(III)alamin to cob(II)alamin; this reduction leads to stimulation of the conversion of apoMTR and aquacob(III)alamin to MTR holoenzyme. The protein is Methionine synthase reductase of Homo sapiens (Human).